A 336-amino-acid polypeptide reads, in one-letter code: UbiA prenyltransferase domain-containing protein 1 (336 aa).

The residue at position 2 (A2) is an N-acetylalanine. The next 8 membrane-spanning stretches (helical) occupy residues 81–101 (LLLGCAVAVLAVHGAGNLVNT), 132–152 (FGVFLYTLGCVCAACLYYLSA), 158–178 (LALIYFGGLSGSFLYTGGIGF), 186–206 (LVILITFGPLAVMFAYAVQVG), 207–227 (SLAIFPLIYAIPLALSTEAIL), 243–265 (IVTLAILIGPTFSYVLYNTLLFV), 275–295 (THCSISLALPLLTIPMAFSLE), and 313–333 (LNLLLGLFYVFGIILAPAGSL).

The protein belongs to the UbiA prenyltransferase family. Interacts with HMGCR and SOAT1.

It is found in the endoplasmic reticulum membrane. It localises to the golgi apparatus membrane. The protein resides in the mitochondrion membrane. The enzyme catalyses menadiol + (2E,6E,10E)-geranylgeranyl diphosphate = menaquinol-4 + diphosphate. It carries out the reaction all-trans-decaprenyl diphosphate + 4-hydroxybenzoate = 4-hydroxy-3-(all-trans-decaprenyl)benzoate + diphosphate. It participates in quinol/quinone metabolism; menaquinone biosynthesis. Its pathway is cofactor biosynthesis; ubiquinone biosynthesis. Its function is as follows. Prenyltransferase that mediates the formation of menaquinone-4 (MK-4) and coenzyme Q10. MK-4 is a vitamin K2 isoform required for endothelial cell development. Mediates the conversion of phylloquinone (PK) into MK-4, probably by cleaving the side chain of phylloquinone (PK) to release 2-methyl-1,4-naphthoquinone (menadione; K3) and then prenylating it with geranylgeranyl pyrophosphate (GGPP) to form MK-4. Also plays a role in cardiovascular development independently of MK-4 biosynthesis, by acting as a coenzyme Q10 biosynthetic enzyme: coenzyme Q10, also named ubiquinone, plays an important antioxidant role in the cardiovascular system. Mediates biosynthesis of coenzyme Q10 in the Golgi membrane, leading to protect cardiovascular tissues from NOS3/eNOS-dependent oxidative stress. The sequence is that of UbiA prenyltransferase domain-containing protein 1 (Ubiad1) from Mus musculus (Mouse).